Consider the following 168-residue polypeptide: Endoribonuclease YbeY (168 aa).

Zn(2+)-binding residues include His132, His136, and His142.

It belongs to the endoribonuclease YbeY family. It depends on Zn(2+) as a cofactor.

It is found in the cytoplasm. Its function is as follows. Single strand-specific metallo-endoribonuclease involved in late-stage 70S ribosome quality control and in maturation of the 3' terminus of the 16S rRNA. The chain is Endoribonuclease YbeY from Clostridium perfringens (strain SM101 / Type A).